The following is a 263-amino-acid chain: Acyl-[acyl-carrier-protein]--UDP-N-acetylglucosamine O-acyltransferase (263 aa).

This sequence belongs to the transferase hexapeptide repeat family. LpxA subfamily. In terms of assembly, homotrimer.

The protein localises to the cytoplasm. The enzyme catalyses a (3R)-hydroxyacyl-[ACP] + UDP-N-acetyl-alpha-D-glucosamine = a UDP-3-O-[(3R)-3-hydroxyacyl]-N-acetyl-alpha-D-glucosamine + holo-[ACP]. Its pathway is glycolipid biosynthesis; lipid IV(A) biosynthesis; lipid IV(A) from (3R)-3-hydroxytetradecanoyl-[acyl-carrier-protein] and UDP-N-acetyl-alpha-D-glucosamine: step 1/6. Functionally, involved in the biosynthesis of lipid A, a phosphorylated glycolipid that anchors the lipopolysaccharide to the outer membrane of the cell. This chain is Acyl-[acyl-carrier-protein]--UDP-N-acetylglucosamine O-acyltransferase, found in Stenotrophomonas maltophilia (strain R551-3).